Reading from the N-terminus, the 158-residue chain is 6,7-dimethyl-8-ribityllumazine synthase (158 aa).

5-amino-6-(D-ribitylamino)uracil-binding positions include phenylalanine 23, 57–59, and 81–83; these read AFE and TVI. (2S)-2-hydroxy-3-oxobutyl phosphate is bound at residue 86–87; sequence GT. Histidine 89 (proton donor) is an active-site residue. Phenylalanine 114 serves as a coordination point for 5-amino-6-(D-ribitylamino)uracil. (2S)-2-hydroxy-3-oxobutyl phosphate is bound at residue arginine 128.

Belongs to the DMRL synthase family.

It catalyses the reaction (2S)-2-hydroxy-3-oxobutyl phosphate + 5-amino-6-(D-ribitylamino)uracil = 6,7-dimethyl-8-(1-D-ribityl)lumazine + phosphate + 2 H2O + H(+). The protein operates within cofactor biosynthesis; riboflavin biosynthesis; riboflavin from 2-hydroxy-3-oxobutyl phosphate and 5-amino-6-(D-ribitylamino)uracil: step 1/2. Catalyzes the formation of 6,7-dimethyl-8-ribityllumazine by condensation of 5-amino-6-(D-ribitylamino)uracil with 3,4-dihydroxy-2-butanone 4-phosphate. This is the penultimate step in the biosynthesis of riboflavin. In Desulforudis audaxviator (strain MP104C), this protein is 6,7-dimethyl-8-ribityllumazine synthase.